Reading from the N-terminus, the 310-residue chain is UPF0761 membrane protein VF_0100 (310 aa).

Helical transmembrane passes span 34–54, 97–117, 136–156, 178–198, 207–227, and 242–262; these read YMAY…LSVL, MTAV…SSID, FSLY…SLAA, LLGW…YLLV, HALI…VGFA, and ALAA…IVLI.

It belongs to the UPF0761 family.

Its subcellular location is the cell inner membrane. The protein is UPF0761 membrane protein VF_0100 of Aliivibrio fischeri (strain ATCC 700601 / ES114) (Vibrio fischeri).